A 79-amino-acid chain; its full sequence is Protein RALF-like 15 (79 aa).

The first 28 residues, 1–28 (MGMSKSIKVIVSLALILFLALAATKVEA), serve as a signal peptide directing secretion. Disulfide bonds link cysteine 46–cysteine 54 and cysteine 66–cysteine 72.

The protein belongs to the plant rapid alkalinization factor (RALF) family.

The protein localises to the secreted. Its function is as follows. Cell signaling peptide that may regulate plant stress, growth, and development. Mediates a rapid alkalinization of extracellular space by mediating a transient increase in the cytoplasmic Ca(2+) concentration leading to a calcium-dependent signaling events through a cell surface receptor and a concomitant activation of some intracellular mitogen-activated protein kinases. The protein is Protein RALF-like 15 (RALFL15) of Arabidopsis thaliana (Mouse-ear cress).